The chain runs to 144 residues: Large ribosomal subunit protein uL15 (144 aa).

The segment at 1-53 is disordered; that stretch reads MFLNTIKPGEGAKHAKRRVGRGIGSGLGKTAGRGHKGQKSRSGGFHKVGFEGG. A compositionally biased stretch (gly residues) spans 21–31; sequence RGIGSGLGKTA.

The protein belongs to the universal ribosomal protein uL15 family. As to quaternary structure, part of the 50S ribosomal subunit.

Its function is as follows. Binds to the 23S rRNA. The chain is Large ribosomal subunit protein uL15 from Laribacter hongkongensis (strain HLHK9).